We begin with the raw amino-acid sequence, 91 residues long: DNA-directed RNA polymerase subunit omega (91 aa).

The protein belongs to the RNA polymerase subunit omega family. As to quaternary structure, the RNAP catalytic core consists of 2 alpha, 1 beta, 1 beta' and 1 omega subunit. When a sigma factor is associated with the core the holoenzyme is formed, which can initiate transcription.

The enzyme catalyses RNA(n) + a ribonucleoside 5'-triphosphate = RNA(n+1) + diphosphate. Its function is as follows. Promotes RNA polymerase assembly. Latches the N- and C-terminal regions of the beta' subunit thereby facilitating its interaction with the beta and alpha subunits. The polypeptide is DNA-directed RNA polymerase subunit omega (Syntrophus aciditrophicus (strain SB)).